A 254-amino-acid chain; its full sequence is Major prion protein (254 aa).

The N-terminal stretch at 1–28 (MANLGYWLLALFVTTCTDVGLCKKRPKP) is a signal peptide. An interaction with ADGRG6 region spans residues 23–38 (KKRPKPGGWNTGGSRY). The interval 23 to 231 (KKRPKPGGWN…SQAYYDGRRS (209 aa)) is interaction with GRB2, ERI3 and SYN1. Residues 24–107 (KRPKPGGWNT…QWNKPSKPKT (84 aa)) form a disordered region. 5 tandem repeats follow at residues 51 to 59 (PQSGGTWGQ), 60 to 67 (PHGGGWGQ), 68 to 75 (PHGGGWGQ), 76 to 83 (PHGGGWGQ), and 84 to 91 (PHGGGWSQ). The interval 51-91 (PQSGGTWGQPHGGGWGQPHGGGWGQPHGGGWGQPHGGGWSQ) is 5 X 8 AA tandem repeats of P-H-G-G-G-W-G-Q. A compositionally biased stretch (gly residues) spans 55–95 (GTWGQPHGGGWGQPHGGGWGQPHGGGWGQPHGGGWSQGGGT). Cu(2+)-binding residues include His-61, Gly-62, Gly-63, His-69, Gly-70, Gly-71, His-77, Gly-78, Gly-79, His-85, Gly-86, and Gly-87. Cys-179 and Cys-214 are disulfide-bonded. Asn-181 and Asn-197 each carry an N-linked (GlcNAc...) asparagine glycan. A lipid anchor (GPI-anchor amidated serine) is attached at Ser-231. Residues 232–254 (SAVLFSSPPVILLISFLIFLIVG) constitute a propeptide, removed in mature form.

This sequence belongs to the prion family. In terms of assembly, monomer and homodimer. Has a tendency to aggregate into amyloid fibrils containing a cross-beta spine, formed by a steric zipper of superposed beta-strands. Soluble oligomers may represent an intermediate stage on the path to fibril formation. Copper binding may promote oligomerization. Interacts with GRB2, APP, ERI3/PRNPIP and SYN1. Mislocalized cytosolically exposed PrP interacts with MGRN1; this interaction alters MGRN1 subcellular location and causes lysosomal enlargement. Interacts with APP. Interacts with KIAA1191. Interacts with ADGRG6.

Its subcellular location is the cell membrane. The protein resides in the golgi apparatus. Functionally, its primary physiological function is unclear. May play a role in neuronal development and synaptic plasticity. May be required for neuronal myelin sheath maintenance. May promote myelin homeostasis through acting as an agonist for ADGRG6 receptor. May play a role in iron uptake and iron homeostasis. Soluble oligomers are toxic to cultured neuroblastoma cells and induce apoptosis (in vitro). Association with GPC1 (via its heparan sulfate chains) targets PRNP to lipid rafts. Also provides Cu(2+) or Zn(2+) for the ascorbate-mediated GPC1 deaminase degradation of its heparan sulfate side chains. The chain is Major prion protein (Prnp) from Rattus norvegicus (Rat).